The sequence spans 875 residues: Probable inorganic carbon transporter subunit DabA (875 aa).

The Zn(2+) site is built by Cys-380, Asp-382, His-563, and Cys-578.

The protein belongs to the inorganic carbon transporter (TC 9.A.2) DabA family. Forms a complex with DabB. The cofactor is Zn(2+).

It localises to the cell membrane. Functionally, part of an energy-coupled inorganic carbon pump. This is Probable inorganic carbon transporter subunit DabA from Geobacillus thermodenitrificans (strain NG80-2).